Consider the following 190-residue polypeptide: Probable chorismate pyruvate-lyase (190 aa).

Residues R77, L115, and E174 each coordinate substrate.

Belongs to the UbiC family.

It localises to the cytoplasm. The catalysed reaction is chorismate = 4-hydroxybenzoate + pyruvate. The protein operates within cofactor biosynthesis; ubiquinone biosynthesis. Functionally, removes the pyruvyl group from chorismate, with concomitant aromatization of the ring, to provide 4-hydroxybenzoate (4HB) for the ubiquinone pathway. This chain is Probable chorismate pyruvate-lyase, found in Shewanella sp. (strain MR-4).